Here is a 634-residue protein sequence, read N- to C-terminus: Probable LRR receptor-like serine/threonine-protein kinase At2g23950 (634 aa).

An N-terminal signal peptide occupies residues 1-27 (MVVMKLITMKIFSVLLLLCFFVTCSLS). The Extracellular segment spans residues 28–236 (SEPRNPEVEA…SSGRRTNILA (209 aa)). Residues asparagine 96 and asparagine 109 are each glycosylated (N-linked (GlcNAc...) asparagine). LRR repeat units follow at residues 99-121 (NLRQVSLQNNNISGKIPPEICSL), 123-145 (KLQTLDLSNNRFSGEIPGSVNQL), 147-167 (NLQYLRLNNNSLSGPFPASLS), and 171-193 (HLSFLDLSYNNLRGPVPKFPART). N-linked (GlcNAc...) asparagine glycosylation occurs at asparagine 155. The helical transmembrane segment at 237–257 (VALGVSLGFAVSVILSLGFIW) threads the bilayer. The Cytoplasmic segment spans residues 258-634 (YRKKQRRLTM…SFAMELSGPR (377 aa)). Threonine 296 carries the phosphothreonine modification. The Protein kinase domain maps to 299–554 (FSSKSILGAG…QVALLCTQFL (256 aa)). 305-313 (LGAGGFGNV) serves as a coordination point for ATP. Threonine 322 carries the post-translational modification Phosphothreonine. Position 327 (lysine 327) interacts with ATP. 2 positions are modified to phosphoserine: serine 380 and serine 383. Threonine 395 carries the post-translational modification Phosphothreonine. Aspartate 422 acts as the Proton acceptor in catalysis. Threonine 455, threonine 456, and threonine 461 each carry phosphothreonine. Tyrosine 469 bears the Phosphotyrosine mark. Serine 471 carries the phosphoserine modification. Threonine 472 bears the Phosphothreonine mark. Serine 476 carries the phosphoserine modification. Threonine 551 is subject to Phosphothreonine.

It belongs to the protein kinase superfamily. Ser/Thr protein kinase family.

The protein resides in the membrane. The catalysed reaction is L-seryl-[protein] + ATP = O-phospho-L-seryl-[protein] + ADP + H(+). It carries out the reaction L-threonyl-[protein] + ATP = O-phospho-L-threonyl-[protein] + ADP + H(+). The sequence is that of Probable LRR receptor-like serine/threonine-protein kinase At2g23950 from Arabidopsis thaliana (Mouse-ear cress).